The following is a 236-amino-acid chain: Small ribosomal subunit protein uS2c (236 aa).

This sequence belongs to the universal ribosomal protein uS2 family.

Its subcellular location is the plastid. The protein resides in the chloroplast. In Draba nemorosa (Woodland whitlowgrass), this protein is Small ribosomal subunit protein uS2c (rps2).